Reading from the N-terminus, the 233-residue chain is Small ribosomal subunit protein uS7m (233 aa).

A mitochondrion-targeting transit peptide spans 1–28 (MAAPTAAGLCPRLRAWLPRLTQVRWSRY).

The protein belongs to the universal ribosomal protein uS7 family. As to quaternary structure, component of the mitochondrial ribosome small subunit (28S) which comprises a 12S rRNA and about 30 distinct proteins.

It is found in the mitochondrion. The polypeptide is Small ribosomal subunit protein uS7m (MRPS7) (Gallus gallus (Chicken)).